The sequence spans 3133 residues: Cysteine repeat modular protein A (3133 aa).

Residues 1 to 39 (MDSASTSMSRVHPSGVYRRPLLPSGGPRSTSERDERVDL) form a disordered region. Residues 30 to 39 (TSERDERVDL) show a composition bias toward basic and acidic residues. The chain crosses the membrane as a helical span at residues 123–143 (LFLLFSSSPLLLLLLLHQFFI). Composition is skewed to basic and acidic residues over residues 173–211 (TFEEREADSHRGSRDGEKVSGSRDIRFEEQEIRSRDGKE) and 301–311 (NESEKAERARL). 2 disordered regions span residues 173–234 (TFEE…EGRR) and 294–317 (VSPSHSGNESEKAERARLEQSTPA). N-linked (GlcNAc...) asparagine glycans are attached at residues N301, N392, and N470. The region spanning 577–644 (DETLEQGKLY…DPHVRFDFCD (68 aa)) is the Kringle domain. 2 disulfides stabilise this stretch: C599–C631 and C620–C643. N-linked (GlcNAc...) asparagine glycans are attached at residues N1364 and N1532. A run of 3 helical transmembrane segments spans residues 2229–2249 (MVWNIVCLMGYYLATLLFNIV), 2276–2296 (LTGISVLSVIDFSTIAFPSWI), and 2339–2359 (VFYALIPIALPIVATIIMSII). An N-linked (GlcNAc...) asparagine glycan is attached at N2369. The next 3 helical transmembrane spans lie at 2420–2440 (AAKFMEDMIPIYVTVLFFVYS), 2489–2509 (VGITGLLVWSIGIPLSCFLVL), and 2539–2559 (WEMVVFARKFLVIVVSSVALI). The N-linked (GlcNAc...) asparagine glycan is linked to N2565. Residues 2569–2589 (VWLAVVIAVIFLIIHLVTQPF) form a helical membrane-spanning segment. N2602 carries an N-linked (GlcNAc...) asparagine glycan. 2 consecutive transmembrane segments (helical) span residues 2607-2627 (IWTITLIVLAMMIGSDFSGSV) and 2632-2652 (LLFVAVLSCMFILEVGVSLMF). Composition is skewed to basic and acidic residues over residues 2827–2838 (FAAKDETPTAEE) and 3049–3069 (QEENARRKLEKEEREEADREI). Disordered stretches follow at residues 2827-2847 (FAAKDETPTAEEKTEEQDERL) and 3049-3101 (QEEN…LPEG). Residues 2955 to 3068 (SEALQKRNRK…KEEREEADRE (114 aa)) adopt a coiled-coil conformation. Positions 3083–3094 (GEDDTATIDDSS) are enriched in acidic residues.

As to quaternary structure, component of a complex, at least composed of cysteine repeat modular protein A (CRMPa), cysteine repeat modular protein B (CRMPb), micronemal protein 15 (MIC15) and thrombospondin type 1 domain-containing protein (TSP1).

It is found in the cell membrane. Its subcellular location is the endoplasmic reticulum. The protein localises to the golgi apparatus. Required for triggering rhoptry secretion. Plays a role in host cell invasion. This is Cysteine repeat modular protein A from Toxoplasma gondii.